The sequence spans 324 residues: Methionyl-tRNA formyltransferase (324 aa).

A (6S)-5,6,7,8-tetrahydrofolate-binding site is contributed by 112 to 115 (SILP).

The protein belongs to the Fmt family.

The catalysed reaction is L-methionyl-tRNA(fMet) + (6R)-10-formyltetrahydrofolate = N-formyl-L-methionyl-tRNA(fMet) + (6S)-5,6,7,8-tetrahydrofolate + H(+). In terms of biological role, attaches a formyl group to the free amino group of methionyl-tRNA(fMet). The formyl group appears to play a dual role in the initiator identity of N-formylmethionyl-tRNA by promoting its recognition by IF2 and preventing the misappropriation of this tRNA by the elongation apparatus. The chain is Methionyl-tRNA formyltransferase from Shewanella loihica (strain ATCC BAA-1088 / PV-4).